The sequence spans 444 residues: 3-isopropylmalate dehydratase large subunit (444 aa).

The [4Fe-4S] cluster site is built by Xaa-348, Cys-408, and Xaa-411. Residues 423 to 444 (ERXXSHSNRNFEGRQGRGGRTH) are disordered.

Belongs to the aconitase/IPM isomerase family. LeuC type 1 subfamily. In terms of assembly, heterodimer of LeuC and LeuD. It depends on [4Fe-4S] cluster as a cofactor.

The enzyme catalyses (2R,3S)-3-isopropylmalate = (2S)-2-isopropylmalate. Its pathway is amino-acid biosynthesis; L-leucine biosynthesis; L-leucine from 3-methyl-2-oxobutanoate: step 2/4. Its function is as follows. Catalyzes the isomerization between 2-isopropylmalate and 3-isopropylmalate, via the formation of 2-isopropylmaleate. In Buchnera aphidicola subsp. Uroleucon rudbeckiae, this protein is 3-isopropylmalate dehydratase large subunit.